A 229-amino-acid chain; its full sequence is MLDRDGFRPNVGIILLNQKNQVFWGKRIRTHSWQFPQGGIDRGETPEQAMFRELHEEVGLMPNHVRVVARTRDWLRYEVPDRYIRRDARGHYKGQKQIWYLLQLMGHDWDLNLRATDHPEFDAWRWNDYWVPLDVVVEFKRGVYEMALTELARFLPRGEQQRNRYLRSGMRPREAHETGPETYGAPGLHPARSGSFRVNPGMELPPGACFDPDPQSGQQQVLHPDPGKA.

The Nudix hydrolase domain occupies 6 to 149; it reads GFRPNVGIIL…KRGVYEMALT (144 aa). Residues 38-59 carry the Nudix box motif; it reads GGIDRGETPEQAMFRELHEEVG. Positions 168–229 are disordered; sequence SGMRPREAHE…QVLHPDPGKA (62 aa).

This sequence belongs to the Nudix hydrolase family. RppH subfamily. It depends on a divalent metal cation as a cofactor.

Its function is as follows. Accelerates the degradation of transcripts by removing pyrophosphate from the 5'-end of triphosphorylated RNA, leading to a more labile monophosphorylated state that can stimulate subsequent ribonuclease cleavage. This is RNA pyrophosphohydrolase from Delftia acidovorans (strain DSM 14801 / SPH-1).